We begin with the raw amino-acid sequence, 333 residues long: Syntaxin-4 (333 aa).

The Cytoplasmic portion of the chain corresponds to 1 to 312 (MGKDRLPELL…QHQKKARKKK (312 aa)). Residues 50-66 (YSVVSQNSHSCSNNNSS) are compositionally biased toward low complexity. The disordered stretch occupies residues 50 to 81 (YSVVSQNSHSCSNNNSSTEPKDRSSSKMTQYG). Positions 91–116 (YTEIRQQLAQIAANLETMNRMAQTVN) form a coiled coil. The t-SNARE coiled-coil homology domain occupies 239-301 (LREMMDRFNE…DKGADELDQA (63 aa)). The helical; Anchor for type IV membrane protein transmembrane segment at 313–333 (IMLIVILAAVLLVLLLVGIYL) threads the bilayer.

The protein belongs to the syntaxin family.

The protein localises to the membrane. Its function is as follows. Potentially involved in docking of synaptic vesicles at presynaptic active zones. The protein is Syntaxin-4 of Drosophila melanogaster (Fruit fly).